A 196-amino-acid chain; its full sequence is Peptidyl-tRNA hydrolase (196 aa).

Residue Tyr-18 participates in tRNA binding. His-23 functions as the Proton acceptor in the catalytic mechanism. Residues Phe-69, Asn-71, and Asn-117 each contribute to the tRNA site.

Belongs to the PTH family. Monomer.

It localises to the cytoplasm. It carries out the reaction an N-acyl-L-alpha-aminoacyl-tRNA + H2O = an N-acyl-L-amino acid + a tRNA + H(+). In terms of biological role, hydrolyzes ribosome-free peptidyl-tRNAs (with 1 or more amino acids incorporated), which drop off the ribosome during protein synthesis, or as a result of ribosome stalling. Catalyzes the release of premature peptidyl moieties from peptidyl-tRNA molecules trapped in stalled 50S ribosomal subunits, and thus maintains levels of free tRNAs and 50S ribosomes. This Vibrio vulnificus (strain CMCP6) protein is Peptidyl-tRNA hydrolase.